A 411-amino-acid chain; its full sequence is Thyroxine-binding globulin (411 aa).

Positions 1-15 are cleaved as a signal peptide; the sequence is MPLFSLVLLILGLHC. Asn-34, Asn-97, Asn-163, and Asn-251 each carry an N-linked (GlcNAc...) asparagine glycan. Thyroxine contacts are provided by Asn-291 and Lys-394.

Belongs to the serpin family. Expressed by the liver and secreted in plasma.

The protein resides in the secreted. Its function is as follows. Major thyroid hormone transport protein in serum. This is Thyroxine-binding globulin (SERPINA7) from Bos taurus (Bovine).